Consider the following 457-residue polypeptide: Cysteine--tRNA ligase (457 aa).

Cys-28 is a Zn(2+) binding site. A 'HIGH' region motif is present at residues 30–40 (MTVYDYCHLGH). Zn(2+) contacts are provided by Cys-209, His-234, and Glu-238. A 'KMSKS' region motif is present at residues 266–270 (KMSKS). Lys-269 provides a ligand contact to ATP.

It belongs to the class-I aminoacyl-tRNA synthetase family. In terms of assembly, monomer. The cofactor is Zn(2+).

It is found in the cytoplasm. The catalysed reaction is tRNA(Cys) + L-cysteine + ATP = L-cysteinyl-tRNA(Cys) + AMP + diphosphate. The protein is Cysteine--tRNA ligase of Laribacter hongkongensis (strain HLHK9).